The sequence spans 981 residues: MKILYSLLLISSIILNTVLNISSQVYDQRILALKGKCYLDSNKNALYDEGEPGFGNVEISLGNATDYKGNKYPIRYSSADGTFIYDGLTQRTTYEFTFTNPKDYYFETYEKTLACPPGVPCIRPTVSADNLAADLLVANTFAYNIPLIKQVGVSSGSSILTVRISVDLGYVEQTQPPTQPPTQPPTQPPTPPPFTGSAVAGLLFTDINGNGIFDGRDVWTSNVSVGLYNFNDKTRALDVNGNVISSITTDANGRYAFENVANGVYCLWMEGTKYFNPGCVGRIEINSATMPKSVASDGVQSPTILRAGSFSLFLTGNSGYGGYAYNDIDLNGYLSSRDQGIAGIIVKIYLPVYNFLFGTVTTDSNGRWSFSGLQPGFPVRIEFVIPNDFTSTGANLVNFVTVGQSIDLSIGLIPKSLTGVNAGPSNPKSFVTTCFVKGSYNGKYKDEPTVVEINKDAQGKAYAQQSADYMKVLASHKDTGSVHGVAFNPDNGDKFVSSYHKTNSDFGPSGSCAIYKLSSGIITTHVNFNDVFGKSYCGGYAHYFDFREISTAGPLVGKASLGQMTYYNKKLYVTNLGKNEILVVPIYQNPNATNVERIPVANPGCSSGDDWHIFPVTVFQGELFTGGVCSGEKGSRLSTYILKYNPNSKSFSTVLFYTLGYARGCRYLDSFGSCVSSVWQKWSNNDSPQALLSTIIFDVSGHLIMAYKDRSGDISAVVSAPELLIACLGTDGLFYLESGGKCGSLVGAGVDQKSLTGLRYGPGNGNFFDNHKTGLHDYTNAFGATKGGRDIIVTTGFDYYEAFEGSIRWYNATSGKQLKGYSLYITSSNGRTPSPTFGKQNGLGDITSVYDSSLPQYRVGRVWLDINGNGIQDAGEPGISGITVFLIYGQQSTPTSQTVSDSNGYFKFEVDFSSNYYCVIPVAFFQAGSSITMRNADPTHPNTNSDAFLSTVDNVYVTSFTSSDAGGYYFNGCSFGIIPKK.

Positions 1–23 (MKILYSLLLISSIILNTVLNISS) are cleaved as a signal peptide. An N-linked (GlcNAc...) asparagine glycan is attached at Asn63. The tract at residues 172 to 195 (EQTQPPTQPPTQPPTQPPTPPPFT) is disordered. The segment covering 177 to 194 (PTQPPTQPPTQPPTPPPF) has biased composition (pro residues). N-linked (GlcNAc...) asparagine glycosylation is found at Asn222, Asn591, and Asn811.

The protein belongs to the serine-aspartate repeat-containing protein (SDr) family.

It localises to the secreted. This chain is Colossin-C (colC), found in Dictyostelium discoideum (Social amoeba).